The sequence spans 76 residues: Conotoxin Im6.9 (76 aa).

A signal peptide spans 1–19; that stretch reads MEKLTILLLVTAVLMSTQA. Residues 20 to 45 constitute a propeptide that is removed on maturation; the sequence is LMQSGIEKRQRAKIKFFSKRKTTAER. Intrachain disulfides connect cysteine 51–cysteine 65, cysteine 58–cysteine 69, and cysteine 64–cysteine 73.

This sequence belongs to the conotoxin O2 superfamily. Expressed by the venom duct.

It localises to the secreted. In terms of biological role, probable neurotoxin. This Conus imperialis (Imperial cone) protein is Conotoxin Im6.9.